Reading from the N-terminus, the 204-residue chain is Putative rubrerythrin (204 aa).

Positions 1–159 constitute a Ferritin-like diiron domain; sequence MINNFFVINM…KLLKEVEEGT (159 aa). Positions 24, 57, 107, 110, 141, 144, 171, 174, 187, and 190 each coordinate Fe(3+). A Rubredoxin-like domain is found at 166-204; that stretch reads PVEWVCRKCGFVHLGKEPPEKCPSCSHPRKYFEVKCEKY.

In terms of assembly, homodimer. Possesses two rubredoxin-like centers and two non-sulfur oxo-bridged di-iron centers per dimer. Fe(3+) is required as a cofactor.

Its subcellular location is the cytoplasm. Functionally, may provide oxidative stress protection via catalytic reduction of intracellular hydrogen peroxide. The polypeptide is Putative rubrerythrin (Methanocaldococcus jannaschii (strain ATCC 43067 / DSM 2661 / JAL-1 / JCM 10045 / NBRC 100440) (Methanococcus jannaschii)).